We begin with the raw amino-acid sequence, 533 residues long: E3 ubiquitin-protein ligase arih1l (533 aa).

2 disordered regions span residues 1-35 and 48-73; these read MDSD…EAVD and PAVA…QEDE. A TRIAD supradomain region spans residues 158 to 369; the sequence is QDLPCQICYL…SAWYNCNRYN (212 aa). Residues C162, C165, C179, H181, C184, C187, C207, C212, C252, C257, C273, C275, C280, C283, H288, C293, C320, and C323 each contribute to the Zn(2+) site. Residues 162 to 212 form an RING-type 1 zinc finger; that stretch reads CQICYLNYPNSYFTGLECGHKFCMQCWGDYLTTKIIEEGMGQTISCPAHNC. The IBR-type zinc-finger motif lies at 232 to 293; sequence LKYQHLITNS…GENWHDPVKC (62 aa). The RING-type 2; atypical zinc-finger motif lies at 320–351; that stretch reads CPKCHVTIEKDGGCNHMVCRNQNCKAEFCWVC. Residue C333 is part of the active site. The Zn(2+) site is built by C338, C343, C348, C351, H358, and C365. The stretch at 409 to 425 forms a coiled coil; sequence KLYAQVKQKMEEMQQHN.

Belongs to the RBR family. Ariadne subfamily.

The protein localises to the cytoplasm. The enzyme catalyses [E2 ubiquitin-conjugating enzyme]-S-ubiquitinyl-L-cysteine + [acceptor protein]-L-lysine = [E2 ubiquitin-conjugating enzyme]-L-cysteine + [acceptor protein]-N(6)-ubiquitinyl-L-lysine.. Its pathway is protein modification; protein ubiquitination. Functionally, E3 ubiquitin-protein ligase, which catalyzes polyubiquitination of target proteins together with ubiquitin-conjugating enzyme E2 ube2l3. This is E3 ubiquitin-protein ligase arih1l (arih1l) from Danio rerio (Zebrafish).